The sequence spans 207 residues: Large ribosomal subunit protein uL4 (207 aa).

Positions 50–75 are disordered; it reads KTKTRSEVAGSGKKPFKQKGTGNARQ.

The protein belongs to the universal ribosomal protein uL4 family. In terms of assembly, part of the 50S ribosomal subunit.

Functionally, one of the primary rRNA binding proteins, this protein initially binds near the 5'-end of the 23S rRNA. It is important during the early stages of 50S assembly. It makes multiple contacts with different domains of the 23S rRNA in the assembled 50S subunit and ribosome. In terms of biological role, forms part of the polypeptide exit tunnel. This is Large ribosomal subunit protein uL4 from Pelobacter propionicus (strain DSM 2379 / NBRC 103807 / OttBd1).